Consider the following 179-residue polypeptide: ATP synthase subunit delta 2 (179 aa).

This sequence belongs to the ATPase delta chain family. In terms of assembly, F-type ATPases have 2 components, F(1) - the catalytic core - and F(0) - the membrane proton channel. F(1) has five subunits: alpha(3), beta(3), gamma(1), delta(1), epsilon(1). F(0) has three main subunits: a(1), b(2) and c(10-14). The alpha and beta chains form an alternating ring which encloses part of the gamma chain. F(1) is attached to F(0) by a central stalk formed by the gamma and epsilon chains, while a peripheral stalk is formed by the delta and b chains.

It localises to the cell inner membrane. Its function is as follows. F(1)F(0) ATP synthase produces ATP from ADP in the presence of a proton or sodium gradient. F-type ATPases consist of two structural domains, F(1) containing the extramembraneous catalytic core and F(0) containing the membrane proton channel, linked together by a central stalk and a peripheral stalk. During catalysis, ATP synthesis in the catalytic domain of F(1) is coupled via a rotary mechanism of the central stalk subunits to proton translocation. In terms of biological role, this protein is part of the stalk that links CF(0) to CF(1). It either transmits conformational changes from CF(0) to CF(1) or is implicated in proton conduction. The sequence is that of ATP synthase subunit delta 2 from Syntrophotalea carbinolica (strain DSM 2380 / NBRC 103641 / GraBd1) (Pelobacter carbinolicus).